The primary structure comprises 126 residues: Histone H2B type 1-N (126 aa).

Residues M1–K12 show a composition bias toward low complexity. The interval M1–E36 is disordered. N-acetylproline is present on P2. The residue at position 3 (E3) is an ADP-ribosyl glutamic acid. Position 6 is an N6-(2-hydroxyisobutyryl)lysine; alternate (K6). N6-(beta-hydroxybutyryl)lysine; alternate is present on K6. K6 carries the N6-acetyllysine; alternate modification. At K6 the chain carries N6-butyryllysine; alternate. K6 carries the N6-crotonyllysine; alternate modification. Position 6 is an N6-lactoyllysine; alternate (K6). Residue K6 forms a Glycyl lysine isopeptide (Lys-Gly) (interchain with G-Cter in SUMO2); alternate linkage. S7 is subject to ADP-ribosylserine. K12 carries the N6-(beta-hydroxybutyryl)lysine; alternate modification. 2 positions are modified to N6-acetyllysine; alternate: K12 and K13. 2 positions are modified to N6-crotonyllysine; alternate: K12 and K13. The residue at position 12 (K12) is an N6-lactoyllysine; alternate. K13 is modified (N6-(2-hydroxyisobutyryl)lysine; alternate). S15 is subject to Phosphoserine; by STK4/MST1. An N6-acetyllysine; alternate mark is found at K16, K17, K21, and K24. An N6-crotonyllysine; alternate mark is found at K16, K17, K21, and K24. N6-lactoyllysine; alternate is present on residues K16, K17, K21, and K24. N6-(beta-hydroxybutyryl)lysine; alternate occurs at positions 17 and 21. The residue at position 17 (K17) is an N6-glutaryllysine; alternate. K21 and K24 each carry N6-(2-hydroxyisobutyryl)lysine; alternate. K21 bears the N6-butyryllysine; alternate mark. Residue K21 forms a Glycyl lysine isopeptide (Lys-Gly) (interchain with G-Cter in SUMO2); alternate linkage. Residue K25 is modified to N6-(2-hydroxyisobutyryl)lysine. N6-(2-hydroxyisobutyryl)lysine; alternate is present on K35. K35 carries the N6-(beta-hydroxybutyryl)lysine; alternate modification. Position 35 is an N6-crotonyllysine; alternate (K35). K35 carries the N6-glutaryllysine; alternate modification. At K35 the chain carries N6-succinyllysine; alternate. Residue K35 forms a Glycyl lysine isopeptide (Lys-Gly) (interchain with G-Cter in ubiquitin); alternate linkage. Residue E36 is modified to PolyADP-ribosyl glutamic acid. Position 37 is a phosphoserine; by AMPK (S37). N6-(2-hydroxyisobutyryl)lysine; alternate is present on residues K44, K47, and K58. Residue K44 is modified to N6-lactoyllysine; alternate. Residues K44 and K47 each carry the N6-glutaryllysine; alternate modification. K47 bears the N6-methyllysine; alternate mark. N6,N6-dimethyllysine; alternate is present on K58. R80 carries the dimethylated arginine modification. K86 carries the N6-(2-hydroxyisobutyryl)lysine; alternate modification. N6-(beta-hydroxybutyryl)lysine; alternate is present on K86. K86 carries the N6-acetyllysine; alternate modification. K86 bears the N6-lactoyllysine; alternate mark. The residue at position 86 (K86) is an N6,N6,N6-trimethyllysine; alternate. R87 and R93 each carry omega-N-methylarginine. K109 bears the N6-(2-hydroxyisobutyryl)lysine; alternate mark. K109 carries the post-translational modification N6-lactoyllysine; alternate. An N6-glutaryllysine; alternate modification is found at K109. Residue K109 is modified to N6-methyllysine; alternate. An O-linked (GlcNAc) serine glycan is attached at S113. A Phosphothreonine modification is found at T116. N6-(2-hydroxyisobutyryl)lysine; alternate occurs at positions 117 and 121. Residues K117 and K121 each carry the N6-(beta-hydroxybutyryl)lysine; alternate modification. 2 positions are modified to N6-lactoyllysine; alternate: K117 and K121. An N6-glutaryllysine; alternate mark is found at K117 and K121. N6-succinyllysine; alternate is present on residues K117 and K121. An N6-malonyllysine; alternate modification is found at K117. Residue K117 is modified to N6-methylated lysine; alternate. Residue K121 forms a Glycyl lysine isopeptide (Lys-Gly) (interchain with G-Cter in ubiquitin); alternate linkage.

This sequence belongs to the histone H2B family. In terms of assembly, the nucleosome is a histone octamer containing two molecules each of H2A, H2B, H3 and H4 assembled in one H3-H4 heterotetramer and two H2A-H2B heterodimers. The octamer wraps approximately 147 bp of DNA. Monoubiquitination at Lys-35 (H2BK34Ub) by the MSL1/MSL2 dimer is required for histone H3 'Lys-4' (H3K4me) and 'Lys-79' (H3K79me) methylation and transcription activation at specific gene loci, such as HOXA9 and MEIS1 loci. Similarly, monoubiquitination at Lys-121 (H2BK120Ub) by the RNF20/40 complex gives a specific tag for epigenetic transcriptional activation and is also prerequisite for histone H3 'Lys-4' and 'Lys-79' methylation. It also functions cooperatively with the FACT dimer to stimulate elongation by RNA polymerase II. H2BK120Ub also acts as a regulator of mRNA splicing: deubiquitination by USP49 is required for efficient cotranscriptional splicing of a large set of exons. Post-translationally, phosphorylation at Ser-37 (H2BS36ph) by AMPK in response to stress promotes transcription. Phosphorylated on Ser-15 (H2BS14ph) by STK4/MST1 during apoptosis; which facilitates apoptotic chromatin condensation. Also phosphorylated on Ser-15 in response to DNA double strand breaks (DSBs), and in correlation with somatic hypermutation and immunoglobulin class-switch recombination. In terms of processing, glcNAcylation at Ser-113 promotes monoubiquitination of Lys-121. It fluctuates in response to extracellular glucose, and associates with transcribed genes. ADP-ribosylated by PARP1 or PARP2 on Ser-7 (H2BS6ADPr) in response to DNA damage. H2BS6ADPr promotes recruitment of CHD1L. Mono-ADP-ribosylated on Glu-3 (H2BE2ADPr) by PARP3 in response to single-strand breaks. Poly ADP-ribosylation on Glu-36 (H2BE35ADPr) by PARP1 regulates adipogenesis: it inhibits phosphorylation at Ser-37 (H2BS36ph), thereby blocking expression of pro-adipogenetic genes. Post-translationally, crotonylation (Kcr) is specifically present in male germ cells and marks testis-specific genes in post-meiotic cells, including X-linked genes that escape sex chromosome inactivation in haploid cells. Crotonylation marks active promoters and enhancers and confers resistance to transcriptional repressors. It is also associated with post-meiotically activated genes on autosomes. In terms of processing, lactylated in macrophages by EP300/P300 by using lactoyl-CoA directly derived from endogenous or exogenous lactate, leading to stimulates gene transcription.

Its subcellular location is the nucleus. It is found in the chromosome. Functionally, core component of nucleosome. Nucleosomes wrap and compact DNA into chromatin, limiting DNA accessibility to the cellular machineries which require DNA as a template. Histones thereby play a central role in transcription regulation, DNA repair, DNA replication and chromosomal stability. DNA accessibility is regulated via a complex set of post-translational modifications of histones, also called histone code, and nucleosome remodeling. The sequence is that of Histone H2B type 1-N from Homo sapiens (Human).